A 405-amino-acid chain; its full sequence is Probable dual-specificity RNA methyltransferase RlmN (405 aa).

Residues M1–L15 show a composition bias toward low complexity. Residues M1–P34 are disordered. Catalysis depends on E130, which acts as the Proton acceptor. Residues S142 to E386 enclose the Radical SAM core domain. Residues C149 and C391 are joined by a disulfide bond. [4Fe-4S] cluster-binding residues include C156, C160, and C163. Residues G211–E212, S245, S268–H270, and N348 contribute to the S-adenosyl-L-methionine site. C391 acts as the S-methylcysteine intermediate in catalysis.

The protein belongs to the radical SAM superfamily. RlmN family. The cofactor is [4Fe-4S] cluster.

It localises to the cytoplasm. The catalysed reaction is adenosine(2503) in 23S rRNA + 2 reduced [2Fe-2S]-[ferredoxin] + 2 S-adenosyl-L-methionine = 2-methyladenosine(2503) in 23S rRNA + 5'-deoxyadenosine + L-methionine + 2 oxidized [2Fe-2S]-[ferredoxin] + S-adenosyl-L-homocysteine. It carries out the reaction adenosine(37) in tRNA + 2 reduced [2Fe-2S]-[ferredoxin] + 2 S-adenosyl-L-methionine = 2-methyladenosine(37) in tRNA + 5'-deoxyadenosine + L-methionine + 2 oxidized [2Fe-2S]-[ferredoxin] + S-adenosyl-L-homocysteine. Its function is as follows. Specifically methylates position 2 of adenine 2503 in 23S rRNA and position 2 of adenine 37 in tRNAs. In Cutibacterium acnes (strain DSM 16379 / KPA171202) (Propionibacterium acnes), this protein is Probable dual-specificity RNA methyltransferase RlmN.